The chain runs to 247 residues: 2,3-bisphosphoglycerate-dependent phosphoglycerate mutase (247 aa).

Substrate is bound by residues 13 to 20 (RHGESDWN), 26 to 27 (TG), R65, 92 to 95 (ERHY), K103, 119 to 120 (RR), and 186 to 187 (GN). Catalysis depends on H14, which acts as the Tele-phosphohistidine intermediate. E92 (proton donor/acceptor) is an active-site residue.

This sequence belongs to the phosphoglycerate mutase family. BPG-dependent PGAM subfamily. In terms of assembly, homotetramer, dimer of dimers.

It carries out the reaction (2R)-2-phosphoglycerate = (2R)-3-phosphoglycerate. It functions in the pathway carbohydrate degradation; glycolysis; pyruvate from D-glyceraldehyde 3-phosphate: step 3/5. In terms of biological role, catalyzes the interconversion of 2-phosphoglycerate and 3-phosphoglycerate. In Mycobacterium leprae (strain Br4923), this protein is 2,3-bisphosphoglycerate-dependent phosphoglycerate mutase.